The sequence spans 420 residues: Ribulose bisphosphate carboxylase (420 aa).

Lys155 (proton acceptor) is an active-site residue. Lys157 serves as a coordination point for substrate. 3 residues coordinate Mg(2+): Lys181, Asp183, and Glu184. Position 181 is an N6-carboxylysine (Lys181). The active-site Proton acceptor is the His273. Substrate is bound by residues Arg274, His306, 343–345, and 365–368; these read SGG and QAGG.

The protein belongs to the RuBisCO large chain family. Type III subfamily. As to quaternary structure, homodimer or homodecamer. In contrast to form I RuBisCO, the form III RuBisCO is composed solely of large subunits. It depends on Mg(2+) as a cofactor.

It catalyses the reaction 2 (2R)-3-phosphoglycerate + 2 H(+) = D-ribulose 1,5-bisphosphate + CO2 + H2O. It carries out the reaction D-ribulose 1,5-bisphosphate + O2 = 2-phosphoglycolate + (2R)-3-phosphoglycerate + 2 H(+). Functionally, catalyzes the addition of molecular CO(2) and H(2)O to ribulose 1,5-bisphosphate (RuBP), generating two molecules of 3-phosphoglycerate (3-PGA). Functions in an archaeal AMP degradation pathway, together with AMP phosphorylase and R15P isomerase. The chain is Ribulose bisphosphate carboxylase from Pyrococcus furiosus (strain ATCC 43587 / DSM 3638 / JCM 8422 / Vc1).